Consider the following 259-residue polypeptide: Imidazole glycerol phosphate synthase subunit HisF (259 aa).

Catalysis depends on residues Asp-11 and Asp-130.

It belongs to the HisA/HisF family. Heterodimer of HisH and HisF.

It localises to the cytoplasm. It catalyses the reaction 5-[(5-phospho-1-deoxy-D-ribulos-1-ylimino)methylamino]-1-(5-phospho-beta-D-ribosyl)imidazole-4-carboxamide + L-glutamine = D-erythro-1-(imidazol-4-yl)glycerol 3-phosphate + 5-amino-1-(5-phospho-beta-D-ribosyl)imidazole-4-carboxamide + L-glutamate + H(+). It participates in amino-acid biosynthesis; L-histidine biosynthesis; L-histidine from 5-phospho-alpha-D-ribose 1-diphosphate: step 5/9. Functionally, IGPS catalyzes the conversion of PRFAR and glutamine to IGP, AICAR and glutamate. The HisF subunit catalyzes the cyclization activity that produces IGP and AICAR from PRFAR using the ammonia provided by the HisH subunit. This Variovorax paradoxus (strain S110) protein is Imidazole glycerol phosphate synthase subunit HisF.